The primary structure comprises 1472 residues: Vacuolar cation-transporting ATPase YPK9 (1472 aa).

Methionine 1 is modified (N-acetylmethionine). Composition is skewed to polar residues over residues 1 to 12 and 72 to 87; these read MDIPSSNQIQHG and SFQS…SGNL. Disordered regions lie at residues 1–32, 71–115, and 179–273; these read MDIP…TATT, HSFQ…SRNP, and AKSY…DDVH. The Cytoplasmic segment spans residues 1–293; that stretch reads MDIPSSNQIQ…YHEKFYPQYA (293 aa). A Phosphothreonine modification is found at threonine 95. 2 stretches are compositionally biased toward low complexity: residues 103–115 and 211–222; these read SSAE…SRNP and SATHSSSSLSRY. A Phosphoserine modification is found at serine 108. Residues 234–243 are compositionally biased toward acidic residues; that stretch reads SQTDEILEDE. Residues 294–315 form a helical membrane-spanning segment; it reads PNLHYQRFYIAEEDLVIGIAAY. Residues 316 to 321 lie on the Vacuolar side of the membrane; that stretch reads QTSKFW. The chain crosses the membrane as a helical span at residues 322 to 344; the sequence is YIIYNLCCFLTFGLVYLLTRWLP. The Cytoplasmic segment spans residues 345–488; sequence HLKVKLYGVK…INLRMKTTSE (144 aa). Residues 489 to 511 traverse the membrane as a helical segment; the sequence is ILFNEVLHPFYVFQVFSIILWGI. Residues 512-514 are Vacuolar-facing; that stretch reads DEY. A helical membrane pass occupies residues 515-533; sequence YYYAACIFLISVLSIFDSL. Topologically, residues 534–693 are cytoplasmic; it reads NEQKKVSRNL…PTGFKFYRDS (160 aa). A helical transmembrane segment spans residues 694-713; it reads FKYIGFMSLIAIFGFCVSCV. Residues 714-726 lie on the Vacuolar side of the membrane; it reads QFIKLGLDKKTMI. A helical membrane pass occupies residues 727–748; that stretch reads LRALDIITIVVPPALPATLTIG. Topologically, residues 749–1244 are cytoplasmic; that stretch reads TNFALSRLKE…ALVTSFACFQ (496 aa). Aspartate 781 acts as the 4-aspartylphosphate intermediate in catalysis. Phosphoserine occurs at positions 1117 and 1120. Aspartate 1187 and aspartate 1191 together coordinate Mg(2+). The helical transmembrane segment at 1245 to 1264 threads the bilayer; it reads YMSLYSAIQFITITILYSRG. At 1265–1271 the chain is on the vacuolar side; it reads SNLGDFQ. The chain crosses the membrane as a helical span at residues 1272 to 1289; sequence FLYIDLLLIVPIAICMSW. Over 1290-1307 the chain is Cytoplasmic; sequence SKSYEKIDKKRPSANLVS. Residues 1308-1331 traverse the membrane as a helical segment; the sequence is PKILVPLLISVFLVFLFQFIPWII. Residues 1332–1351 are Vacuolar-facing; the sequence is VQKMSWYIKPIVGGDDAVQS. A helical membrane pass occupies residues 1352–1374; the sequence is SDNTVLFFVSNFQYILTAIVLSV. Topologically, residues 1375–1387 are cytoplasmic; that stretch reads GPPYREPMSKNFE. Residues 1388 to 1407 form a helical membrane-spanning segment; sequence FIVDITVSIGASLLLMTLDT. Residues 1408–1423 lie on the Vacuolar side of the membrane; it reads ESYLGKMLQLTPISNS. Residues 1424–1446 traverse the membrane as a helical segment; that stretch reads FTMFIIVWVILNYYAQLYIPPSI. At 1447 to 1472 the chain is on the cytoplasmic side; sequence KGWLKKKKSSKKYKLLIQEEMKLKEV.

Belongs to the cation transport ATPase (P-type) (TC 3.A.3) family. Type V subfamily.

It is found in the vacuole membrane. The catalysed reaction is ATP + H2O = ADP + phosphate + H(+). Its function is as follows. Vacuolar transporter which plays a role in sequestration of divalent heavy metal ions. The chain is Vacuolar cation-transporting ATPase YPK9 (YPK9) from Saccharomyces cerevisiae (strain ATCC 204508 / S288c) (Baker's yeast).